The sequence spans 243 residues: uncharacterized protein (243 aa).

Residues 55–75 (IILIILLTIFMVISTLVIAFV) traverse the membrane as a helical segment.

It localises to the membrane. This is an uncharacterized protein from Rickettsia prowazekii (strain Madrid E).